Consider the following 358-residue polypeptide: Protein RecA (358 aa).

66–73 (GPESSGKT) is an ATP binding site.

The protein belongs to the RecA family.

The protein resides in the cytoplasm. Can catalyze the hydrolysis of ATP in the presence of single-stranded DNA, the ATP-dependent uptake of single-stranded DNA by duplex DNA, and the ATP-dependent hybridization of homologous single-stranded DNAs. It interacts with LexA causing its activation and leading to its autocatalytic cleavage. The protein is Protein RecA of Herpetosiphon aurantiacus (strain ATCC 23779 / DSM 785 / 114-95).